The sequence spans 619 residues: DNA mismatch repair protein MutL (619 aa).

Belongs to the DNA mismatch repair MutL/HexB family.

Functionally, this protein is involved in the repair of mismatches in DNA. It is required for dam-dependent methyl-directed DNA mismatch repair. May act as a 'molecular matchmaker', a protein that promotes the formation of a stable complex between two or more DNA-binding proteins in an ATP-dependent manner without itself being part of a final effector complex. In Xylella fastidiosa (strain M23), this protein is DNA mismatch repair protein MutL.